We begin with the raw amino-acid sequence, 37 residues long: Large ribosomal subunit protein bL36 (37 aa).

It belongs to the bacterial ribosomal protein bL36 family.

This Sulfurovum sp. (strain NBC37-1) protein is Large ribosomal subunit protein bL36.